Here is a 460-residue protein sequence, read N- to C-terminus: V-type ATP synthase beta chain (460 aa).

The protein belongs to the ATPase alpha/beta chains family.

Produces ATP from ADP in the presence of a proton gradient across the membrane. The V-type beta chain is a regulatory subunit. The polypeptide is V-type ATP synthase beta chain (Acetivibrio thermocellus (strain ATCC 27405 / DSM 1237 / JCM 9322 / NBRC 103400 / NCIMB 10682 / NRRL B-4536 / VPI 7372) (Clostridium thermocellum)).